Reading from the N-terminus, the 590-residue chain is MIVFDNGVRVFINTSTNKDIYVGISGFGFEKDIGGILGTAHLLEHILISFDVSRFIANASTARSYMSFWCTSIRGRSTPVDAIRTLISWFFDRDGLKHYFPVSKIKYHIKELENEYYFRNEVFHCMDALTFLANGDLYNGGRLSMLDRLDDMPLILQDRMCAITGPNIVIFVRELNDVVLSLLVSTFGTLPSCPLTIPCTLPTPIGGKIIMMPSPFYTVMVRVQPSLYNILSILCLYEIYHLVDYETVNNKLYVTISFIHEHEYESFLHGSARLNFTIYKKIRLHYGDDFLMNMYLSFPCIRHDIFDYLTIINTNVSTMIPSLEQNIYQSIKTGDYIVVYPNFSNTMSNVADRQLHKTVVIDTNIVYVTKPTTVIDLMKKHTHNDMYIKYSDTEFIDYVQLALGLRRKIHKNVNGIHIRHQFSADDIKTILESETFMKYSKSKPAAMYQYLILSFFVSGNTIEDILQHRESVIKLCRTYKNKILLGKQTRYDIQTLSSFVCGIFKGPSITSEYLTDIMWKLKRKGLIYSLEFVELQKNMFYLFMFTIYPEDVTSYLTSRKLFTSRCVVVSKKCNVEDFSSMKKDIIIKLR.

His41 provides a ligand contact to Zn(2+). Glu44 is a catalytic residue. His45 lines the Zn(2+) pocket.

The protein belongs to the peptidase M44 family. Zn(2+) serves as cofactor.

Its function is as follows. Seems to be involved in viral proteins maturation by cleavage at Ala-Gly-|-Xaa motifs. This is Probable metalloendopeptidase G1-type (GP045L) from Oryctolagus cuniculus (Rabbit).